Consider the following 850-residue polypeptide: Protein monoglycylase TTLL8 (850 aa).

2 disordered regions span residues 1-29 (MEPE…QGIS) and 228-254 (RSSR…DAEN). The TTL domain occupies 222–580 (SHQSCSRSSR…DRSCDIGNFE (359 aa)). Residues lysine 354, 360 to 361 (RG), 392 to 395 (QKYI), 405 to 407 (KFD), and 449 to 450 (CN) each bind ATP. Residue arginine 360 coordinates a protein. The Mg(2+) site is built by aspartate 527, glutamate 540, and asparagine 542. Glutamate 540 is a binding site for ATP. The segment at 627-652 (AQPLKARGPSAMPDPAQGPPSPALQR) is disordered.

It depends on Mg(2+) as a cofactor.

It is found in the cytoplasm. Its subcellular location is the cytoskeleton. The protein localises to the cell projection. The protein resides in the cilium. It localises to the cilium axoneme. It is found in the flagellum axoneme. It catalyses the reaction L-glutamyl-[protein] + glycine + ATP = glycyl-L-glutamyl-[protein] + ADP + phosphate + H(+). In terms of biological role, monoglycylase which modifies both tubulin and non-tubulin proteins, adding a single glycine to the gamma-carboxyl groups of specific glutamate residues to generate monoglycine side chains within the C-terminal tail of target proteins. Not involved in elongation step of the polyglycylation reaction. Preferentially monoglycylates alpha-tubulin over beta-tubulin. Together with TTLL3, mediates microtubule glycylation of primary and motile cilia, which is essential for their stability and maintenance. Together with TTLL3, glycylates sperm flagella which regulates axonemal dynein motor activity, thereby controlling flagellar beat, directional sperm swimming and male fertility. Monoglycylates non-tubulin proteins such as ANP32A, ANP32B, SET, NCL and NAP1. The protein is Protein monoglycylase TTLL8 of Homo sapiens (Human).